A 583-amino-acid polypeptide reads, in one-letter code: MAGRRVNVNVGVLGHIDSGKTALARALSTTASTAAFDKQPQSRERGITLDLGFSCFVVPLPGAEPGSSDTLLQVTLVDCPGHASLIRTIIGGAQIIDLMMLVIDVTKGMQTQSAECLVIGQIACQKLVVVLNKIDLLAEGKRQAAIDKMTKKMQKTLENTKFRGAPIIPVAAKPGGPEAPETEAPQGISELIELLKSQISIPTRDPSGPFLMSVDHCFSIKGQGTVMTGTILSGTISLGDSVEIPALKVVKKVKSMQMFHTPVTSAMQGDRLGICVTQFDPKLLERGLVCAPESLHTVHAALISVEKIPYFRGPLQTKAKFHITVGHETVMGRTLFFSPAPDSFDLEPVLDSFDLSREYLFQEQYLCKDSMPTATEGDDEADPKAGHAPGGHCPRQQWALVEFEKPVTCPRLCLVIGSRLDADIHTNTCRLAFHGVLLQGLEDKNYIESFLPALRVYKLKHKHGLVERVMDDYSVIGRSLFKKETNIQLFVGLKVQLSTGEQGIIDSAFGQSGKFKIHIPGGLSPESKKILTPTLKKRSRAGRGETTKPEEGTERPEPIQPVTLNLSFKRYVFDTQKRMVQTP.

The tr-type G domain maps to 5-203 (RVNVNVGVLG…LLKSQISIPT (199 aa)). Residues 14 to 21 (GHIDSGKT) form a G1 region. Residues glycine 19, threonine 21, and alanine 22 each coordinate GTP. Residue threonine 21 participates in Mg(2+) binding. Residues 46–50 (GITLD) are G2. Mg(2+)-binding residues include threonine 48 and aspartate 78. The segment at 78-81 (DCPG) is G3. Positions 132-135 (NKID) are G4. 2 residues coordinate GTP: aspartate 135 and lysine 173. The interval 171-173 (AAK) is G5. Positions 371–390 (MPTATEGDDEADPKAGHAPG) are disordered. Residue serine 524 is modified to Phosphoserine. The interval 528–562 (KKILTPTLKKRSRAGRGETTKPEEGTERPEPIQPV) is disordered. The residue at position 532 (threonine 532) is a Phosphothreonine. A Nuclear localization signal motif is present at residues 534-540 (TLKKRSR). Over residues 542-557 (GRGETTKPEEGTERPE) the composition is skewed to basic and acidic residues. Arginine 543 bears the Omega-N-methylarginine mark.

The protein belongs to the TRAFAC class translation factor GTPase superfamily. Classic translation factor GTPase family. SelB subfamily. Mg(2+) is required as a cofactor. The cofactor is Mn(2+).

Its subcellular location is the cytoplasm. It is found in the nucleus. It carries out the reaction GTP + H2O = GDP + phosphate + H(+). Translation factor required for the incorporation of the rare amino acid selenocysteine encoded by UGA codons. Replaces the eRF1-eRF3-GTP ternary complex for the insertion of selenocysteine directed by the UGA codon. Insertion of selenocysteine at UGA codons is mediated by SECISBP2 and EEFSEC: SECISBP2 (1) specifically binds the SECIS sequence once the 80S ribosome encounters an in-frame UGA codon and (2) contacts the RPS27A/eS31 of the 40S ribosome before ribosome stalling. (3) GTP-bound EEFSEC then delivers selenocysteinyl-tRNA(Sec) to the 80S ribosome and adopts a preaccommodated state conformation. (4) After GTP hydrolysis, EEFSEC dissociates from the assembly, selenocysteinyl-tRNA(Sec) accommodates, and peptide bond synthesis and selenoprotein elongation occur. The polypeptide is Selenocysteine-specific elongation factor (Eefsec) (Mus musculus (Mouse)).